The primary structure comprises 366 residues: Apolipoprotein A-V (366 aa).

A signal peptide spans methionine 1–alanine 23. Coiled coils occupy residues alanine 54–aspartate 157 and threonine 236–alanine 262. Threonine 55 carries the phosphothreonine; by FAM20C modification. Serine 59 bears the Phosphoserine mark.

Belongs to the apolipoprotein A1/A4/E family. In terms of assembly, interacts with GPIHBP1. Interacts with SORL1; this interaction leads to APOA5 internalization and sorting either to lysosomes and degradation, or to the trans-Golgi network. Post-translationally, phosphorylated by FAM20C in the extracellular medium. As to expression, liver and plasma.

The protein localises to the secreted. Its subcellular location is the early endosome. The protein resides in the late endosome. It localises to the golgi apparatus. It is found in the trans-Golgi network. Minor apolipoprotein mainly associated with HDL and to a lesser extent with VLDL. May also be associated with chylomicrons. Important determinant of plasma triglyceride (TG) levels by both being a potent stimulator of apo-CII lipoprotein lipase (LPL) TG hydrolysis and an inhibitor of the hepatic VLDL-TG production rate (without affecting the VLDL-apoB production rate). Activates poorly lecithin:cholesterol acyltransferase (LCAT) and does not enhance efflux of cholesterol from macrophages. Binds heparin. This is Apolipoprotein A-V (APOA5) from Homo sapiens (Human).